A 244-amino-acid polypeptide reads, in one-letter code: Type III pantothenate kinase (244 aa).

8–15 (DQGNSACK) lines the ATP pocket. Substrate is bound by residues tyrosine 88 and 94–97 (GADR). Catalysis depends on aspartate 96, which acts as the Proton acceptor. Aspartate 117 contributes to the K(+) binding site. Residue threonine 120 participates in ATP binding. A substrate-binding site is contributed by threonine 175.

This sequence belongs to the type III pantothenate kinase family. Homodimer. NH4(+) is required as a cofactor. The cofactor is K(+).

It localises to the cytoplasm. It catalyses the reaction (R)-pantothenate + ATP = (R)-4'-phosphopantothenate + ADP + H(+). The protein operates within cofactor biosynthesis; coenzyme A biosynthesis; CoA from (R)-pantothenate: step 1/5. Functionally, catalyzes the phosphorylation of pantothenate (Pan), the first step in CoA biosynthesis. The sequence is that of Type III pantothenate kinase from Porphyromonas gingivalis (strain ATCC BAA-308 / W83).